The following is a 300-amino-acid chain: tRNA dimethylallyltransferase 2 (300 aa).

ATP is bound at residue G13–T20. Residue T15–T20 coordinates substrate. The tract at residues D38 to Q41 is interaction with substrate tRNA.

The protein belongs to the IPP transferase family. Monomer. It depends on Mg(2+) as a cofactor.

The enzyme catalyses adenosine(37) in tRNA + dimethylallyl diphosphate = N(6)-dimethylallyladenosine(37) in tRNA + diphosphate. In terms of biological role, catalyzes the transfer of a dimethylallyl group onto the adenine at position 37 in tRNAs that read codons beginning with uridine, leading to the formation of N6-(dimethylallyl)adenosine (i(6)A). The protein is tRNA dimethylallyltransferase 2 of Porphyromonas gingivalis (strain ATCC 33277 / DSM 20709 / CIP 103683 / JCM 12257 / NCTC 11834 / 2561).